Reading from the N-terminus, the 692-residue chain is Elongation factor G (692 aa).

In terms of domain architecture, tr-type G spans 8-282; sequence AKTRNIGIMA…AVIAYLPSPL (275 aa). Residues 17-24, 81-85, and 135-138 each bind GTP; these read AHVDAGKT, DTPGH, and NKMD.

It belongs to the TRAFAC class translation factor GTPase superfamily. Classic translation factor GTPase family. EF-G/EF-2 subfamily.

The protein localises to the cytoplasm. Its function is as follows. Catalyzes the GTP-dependent ribosomal translocation step during translation elongation. During this step, the ribosome changes from the pre-translocational (PRE) to the post-translocational (POST) state as the newly formed A-site-bound peptidyl-tRNA and P-site-bound deacylated tRNA move to the P and E sites, respectively. Catalyzes the coordinated movement of the two tRNA molecules, the mRNA and conformational changes in the ribosome. In Streptococcus pyogenes serotype M1, this protein is Elongation factor G (fus).